A 515-amino-acid polypeptide reads, in one-letter code: Bifunctional purine biosynthesis protein PurH (515 aa).

An MGS-like domain is found at 1–145 (MTKRVLISVS…KNHASVTVVV (145 aa)).

The protein belongs to the PurH family.

It catalyses the reaction (6R)-10-formyltetrahydrofolate + 5-amino-1-(5-phospho-beta-D-ribosyl)imidazole-4-carboxamide = 5-formamido-1-(5-phospho-D-ribosyl)imidazole-4-carboxamide + (6S)-5,6,7,8-tetrahydrofolate. The enzyme catalyses IMP + H2O = 5-formamido-1-(5-phospho-D-ribosyl)imidazole-4-carboxamide. It functions in the pathway purine metabolism; IMP biosynthesis via de novo pathway; 5-formamido-1-(5-phospho-D-ribosyl)imidazole-4-carboxamide from 5-amino-1-(5-phospho-D-ribosyl)imidazole-4-carboxamide (10-formyl THF route): step 1/1. The protein operates within purine metabolism; IMP biosynthesis via de novo pathway; IMP from 5-formamido-1-(5-phospho-D-ribosyl)imidazole-4-carboxamide: step 1/1. In Streptococcus pneumoniae serotype 2 (strain D39 / NCTC 7466), this protein is Bifunctional purine biosynthesis protein PurH.